The primary structure comprises 360 residues: Photosystem II protein D1 (360 aa).

3 consecutive transmembrane segments (helical) span residues 29–46 (YIGW…TATS), 118–133 (HFLL…EWEF), and 142–156 (WISV…AASA). His118 serves as a coordination point for chlorophyll a. Tyr126 is a binding site for pheophytin a. 2 residues coordinate [CaMn4O5] cluster: Asp170 and Glu189. Residues 197–218 (LHQLGVAGVFGGSLFSAMHGSL) form a helical membrane-spanning segment. His198 lines the chlorophyll a pocket. Residues His215 and 264-265 (SF) each bind a quinone. Position 215 (His215) interacts with Fe cation. Position 272 (His272) interacts with Fe cation. Residues 274–288 (FLGLWPVVGIWFTSM) form a helical membrane-spanning segment. Residues His332, Glu333, Asp342, and Ala344 each contribute to the [CaMn4O5] cluster site. A propeptide spanning residues 345–360 (SNESLPLALVAPAING) is cleaved from the precursor.

The protein belongs to the reaction center PufL/M/PsbA/D family. PSII is composed of 1 copy each of membrane proteins PsbA, PsbB, PsbC, PsbD, PsbE, PsbF, PsbH, PsbI, PsbJ, PsbK, PsbL, PsbM, PsbT, PsbX, PsbY, PsbZ, Psb30/Ycf12, at least 3 peripheral proteins of the oxygen-evolving complex and a large number of cofactors. It forms dimeric complexes. The cofactor is The D1/D2 heterodimer binds P680, chlorophylls that are the primary electron donor of PSII, and subsequent electron acceptors. It shares a non-heme iron and each subunit binds pheophytin, quinone, additional chlorophylls, carotenoids and lipids. D1 provides most of the ligands for the Mn4-Ca-O5 cluster of the oxygen-evolving complex (OEC). There is also a Cl(-1) ion associated with D1 and D2, which is required for oxygen evolution. The PSII complex binds additional chlorophylls, carotenoids and specific lipids.. Post-translationally, tyr-161 forms a radical intermediate that is referred to as redox-active TyrZ, YZ or Y-Z. C-terminally processed by CTPA; processing is essential to allow assembly of the oxygen-evolving complex and thus photosynthetic growth.

Its subcellular location is the plastid. The protein resides in the chloroplast thylakoid membrane. The enzyme catalyses 2 a plastoquinone + 4 hnu + 2 H2O = 2 a plastoquinol + O2. Its function is as follows. Photosystem II (PSII) is a light-driven water:plastoquinone oxidoreductase that uses light energy to abstract electrons from H(2)O, generating O(2) and a proton gradient subsequently used for ATP formation. It consists of a core antenna complex that captures photons, and an electron transfer chain that converts photonic excitation into a charge separation. The D1/D2 (PsbA/PsbD) reaction center heterodimer binds P680, the primary electron donor of PSII as well as several subsequent electron acceptors. In Antithamnion sp. (Red alga), this protein is Photosystem II protein D1.